The chain runs to 532 residues: Nucleobase-ascorbate transporter 6 (532 aa).

The interval 1-24 is disordered; the sequence is MAGGGAPAPKADEPQPHPPKDQLP. Residues 10-20 show a composition bias toward basic and acidic residues; it reads KADEPQPHPPK. Transmembrane regions (helical) follow at residues 39-59, 75-95, 97-117, 137-157, 163-185, 192-212, 223-243, 289-309, 361-381, 392-414, 426-446, and 463-483; these read AILL…LIPT, VIQT…LFGT, LPAV…IILS, TQGA…SGLW, FLSP…EFGF, IEIG…LPHV, FAVI…TVGG, FAMM…FVAV, VGSR…SILG, APII…LSFL, FILG…NEYT, and DMVN…AFFL.

Belongs to the nucleobase:cation symporter-2 (NCS2) (TC 2.A.40) family. In terms of tissue distribution, expressed in the apical region of cotyledons 4 days after imbibition (DAI). Expressed in the whole vasculature at 12 DAI. Expressed in the root central cylinder and lateral root primordia. Expressed in the vasculature of sepals, filaments, carpels and developing siliques.

The protein localises to the membrane. The chain is Nucleobase-ascorbate transporter 6 (NAT6) from Arabidopsis thaliana (Mouse-ear cress).